Consider the following 331-residue polypeptide: D-lactate dehydrogenase (331 aa).

NAD(+) is bound by residues 156–157, Asp-176, 206–207, 233–235, and Asp-259; these read RI, MP, and TAR. Arg-235 is a catalytic residue. Glu-264 is a catalytic residue. The active-site Proton donor is the His-296.

The protein belongs to the D-isomer specific 2-hydroxyacid dehydrogenase family.

It catalyses the reaction (R)-lactate + NAD(+) = pyruvate + NADH + H(+). The protein is D-lactate dehydrogenase (ldhD) of Treponema pallidum (strain Nichols).